Reading from the N-terminus, the 242-residue chain is MVESKVVVPESVLKKRKREEEWALEKKQNVEAAKKKNAENRKLIFKRAEQYSKEYAEKEKELISLKREAKLKGGFYVDPEAKLLFIIRIRGINAIDPKTKKILQLLRLRQIFNGVFLKVNKATMNMLRRVEPYVTYGFPNLKSVKELIYKRGYGKLNHQRIALTDNSIVEQALGKHGIICTEDLIHEILTVGPHFKEANNFLWPFQLKAPLGGLKKKRNHYVEGGDAGNRENFINELIRRMN.

This sequence belongs to the universal ribosomal protein uL30 family.

In Arabidopsis thaliana (Mouse-ear cress), this protein is Large ribosomal subunit protein uL30y (RPL7B).